Reading from the N-terminus, the 366-residue chain is Ribosomal RNA large subunit methyltransferase M (366 aa).

Residues S188, 221-224 (CPGG), D240, D260, and D277 each bind S-adenosyl-L-methionine. K306 functions as the Proton acceptor in the catalytic mechanism.

The protein belongs to the class I-like SAM-binding methyltransferase superfamily. RNA methyltransferase RlmE family. RlmM subfamily. As to quaternary structure, monomer.

The protein localises to the cytoplasm. It carries out the reaction cytidine(2498) in 23S rRNA + S-adenosyl-L-methionine = 2'-O-methylcytidine(2498) in 23S rRNA + S-adenosyl-L-homocysteine + H(+). In terms of biological role, catalyzes the 2'-O-methylation at nucleotide C2498 in 23S rRNA. This chain is Ribosomal RNA large subunit methyltransferase M, found in Shigella flexneri serotype 5b (strain 8401).